We begin with the raw amino-acid sequence, 160 residues long: Serine-protein kinase RsbW (160 aa).

Belongs to the anti-sigma-factor family.

The catalysed reaction is L-seryl-[protein] + ATP = O-phospho-L-seryl-[protein] + ADP + H(+). The enzyme catalyses L-threonyl-[protein] + ATP = O-phospho-L-threonyl-[protein] + ADP + H(+). Negative regulator of sigma-B activity. Phosphorylates and inactivates its specific antagonist protein, RsbV. Upon phosphorylation of RsbV, RsbW is released and binds to sigma-B, thereby blocking its ability to form an RNA polymerase holoenzyme (E-sigma-B). The chain is Serine-protein kinase RsbW from Bacillus cereus (strain Q1).